The primary structure comprises 2724 residues: Eukaryotic translation initiation factor 2-alpha kinase 2 (2724 aa).

Residues M1 to N24 are Cytoplasmic-facing. Residues G25–V45 traverse the membrane as a helical segment. Topologically, residues Y46–K673 are extracellular. The segment at K112–R153 is disordered. Positions K120–Q146 are enriched in basic and acidic residues. A helical membrane pass occupies residues T674–E694. The Cytoplasmic segment spans residues K695 to R718. A helical membrane pass occupies residues I719–F739. The Extracellular portion of the chain corresponds to E740–E800. A helical membrane pass occupies residues L801–I821. Residues Y822 to Q832 are Cytoplasmic-facing. A helical transmembrane segment spans residues F833 to Y853. The Extracellular portion of the chain corresponds to D854–Y876. A helical transmembrane segment spans residues V877–I897. Residues R898–N908 lie on the Cytoplasmic side of the membrane. A helical transmembrane segment spans residues Y909–L929. At T930 to Y996 the chain is on the extracellular side. A helical membrane pass occupies residues A997–I1017. Topologically, residues R1018 to P2724 are cytoplasmic. K2029 is a binding site for ATP. The region spanning K2084–L2719 is the Protein kinase domain. The stretch at I2120–K2155 forms a coiled coil. The Proton acceptor role is filled by D2229. Residues E2479–N2507 form a disordered region. The segment covering A2488–G2502 has biased composition (basic residues).

The protein belongs to the protein kinase superfamily. Ser/Thr protein kinase family. GCN2 subfamily. Post-translationally, auto-phosphorylated.

Its subcellular location is the membrane. The catalysed reaction is L-seryl-[protein] + ATP = O-phospho-L-seryl-[protein] + ADP + H(+). It catalyses the reaction L-threonyl-[protein] + ATP = O-phospho-L-threonyl-[protein] + ADP + H(+). In terms of biological role, phosphorylates translation factor eIF2alpha in salivary gland sporozoites during dormancy, which leads to an inhibition of protein translation and accumulation of stalled mRNAs into granules. The sequence is that of Eukaryotic translation initiation factor 2-alpha kinase 2 from Plasmodium berghei (strain Anka).